A 473-amino-acid chain; its full sequence is Ornithine aminotransferase, mitochondrial (473 aa).

A mitochondrion-targeting transit peptide spans 1–32 (MAAALARRGGGGLARALARGRGMCSATAAERA). K293 is subject to N6-(pyridoxal phosphate)lysine.

This sequence belongs to the class-III pyridoxal-phosphate-dependent aminotransferase family. In terms of assembly, homotetramer. It depends on pyridoxal 5'-phosphate as a cofactor.

It is found in the mitochondrion matrix. The catalysed reaction is a 2-oxocarboxylate + L-ornithine = L-glutamate 5-semialdehyde + an L-alpha-amino acid. The protein operates within amino-acid biosynthesis; L-proline biosynthesis; L-glutamate 5-semialdehyde from L-ornithine: step 1/1. Confers drought and oxidative stress tolerance mainly through enhancing ROS-scavenging capacity and Pro pre-accumulation. The protein is Ornithine aminotransferase, mitochondrial (OAT) of Oryza sativa subsp. japonica (Rice).